The chain runs to 342 residues: Nucleoid-associated protein Sbal223_1817 (342 aa).

Belongs to the YejK family.

It localises to the cytoplasm. It is found in the nucleoid. This is Nucleoid-associated protein Sbal223_1817 from Shewanella baltica (strain OS223).